A 441-amino-acid chain; its full sequence is Glutamate--tRNA ligase 1 (441 aa).

Residues 7–17 carry the 'HIGH' region motif; the sequence is PSPTGYMHIGN. A 'KMSKS' region motif is present at residues 236–240; it reads KMSKR. K239 lines the ATP pocket.

The protein belongs to the class-I aminoacyl-tRNA synthetase family. Glutamate--tRNA ligase type 1 subfamily. As to quaternary structure, monomer.

The protein resides in the cytoplasm. The catalysed reaction is tRNA(Glu) + L-glutamate + ATP = L-glutamyl-tRNA(Glu) + AMP + diphosphate. Its function is as follows. Catalyzes the attachment of glutamate to tRNA(Glu) in a two-step reaction: glutamate is first activated by ATP to form Glu-AMP and then transferred to the acceptor end of tRNA(Glu). This chain is Glutamate--tRNA ligase 1, found in Anaplasma marginale (strain St. Maries).